Consider the following 1082-residue polypeptide: Neisserial autotransporter lipoprotein NalP (1082 aa).

The signal sequence occupies residues 1-27 (MRTTPTFPTKTFKPTAMALAVATTLSA). C28 carries N-palmitoyl cysteine lipidation. C28 carries the S-diacylglycerol cysteine lipid modification. Residues 110-482 (NDAYKNLINL…WGLLDAGKAM (373 aa)) enclose the Peptidase S8 domain. Catalysis depends on charge relay system residues D138, H210, and S426. Residues 808–1082 (DGLDHNGTGL…SGRVGVGYRF (275 aa)) enclose the Autotransporter domain.

Belongs to the peptidase S8 family. Probably auto-processes to yield a 68-70 kDa form and a C-terminal 30 kDa translocator domain; upon overexpression in situ and in E.coli full-length protein is seen as well as (probably) auto-processed forms of 68-70 kDa and 30 kDa in size, suggesting this may have protease activity.

The protein localises to the cell outer membrane. It is found in the cell surface. It localises to the secreted. Its subcellular location is the host cytoplasm. The protein resides in the host perinuclear region. Cleavage of host complement factor C3 is inhibited by PMSF. Functionally, major human immunogenic protein, detected in patients recovering from meningitidis. Autotransporter with a secreted protease domain involved in processing other autotransporter proteins including App, IgA, LbpB and NHBA. Probably autoprocesses to release the about 70 kDa passenger domain. Both cell surface protein (Neisserial autotransporter lipoprotein NalP) and the passenger domain cleave human (host) complement factor C3, generating a shorter alpha chain and a longer beta chain than normal. Uptake of a passenger domain fragment (residues 101-784) by human cells increases cell metabolic activity; the serine protease activity is required for this increase. Its function is as follows. Cleaves human (host) complement factor C3, generating a shorter alpha chain and a longer beta chain than normal. Does not act on mouse or rabbit C3. Cleavage causes C3b degradation by human CFI and CFH, and thus decreases deposition of C3b on the bacteria surface and probably facilitates complement escape. In terms of biological role, plays a role in extracellular-DNA (eDNA) mediated biofilm formation. In some strains (including cc32 strain MC58) eDNA stimulates biofilm formation. When NalP is not expressed (and no longer processes NHBA or IgA) biofilm formation increases. This Neisseria meningitidis serogroup B (strain ATCC BAA-335 / MC58) protein is Neisserial autotransporter lipoprotein NalP.